A 227-amino-acid chain; its full sequence is Cytochrome c oxidase subunit 2 (227 aa).

Residues 1–14 (MAYPVQLGFQDAAS) are Mitochondrial intermembrane-facing. A helical membrane pass occupies residues 15-45 (PIMEELLYFHDHTLMIVFLISSLVLYIISLM). The Mitochondrial matrix portion of the chain corresponds to 46–59 (LTTKLMHTSTMDAQ). A helical transmembrane segment spans residues 60–87 (EVETVWTILPAIILILIALPSLRILYMM). Residues 88–227 (DEITTPSLTL…HFEEWLLSMF (140 aa)) lie on the Mitochondrial intermembrane side of the membrane. Cu cation is bound by residues histidine 161, cysteine 196, glutamate 198, cysteine 200, histidine 204, and methionine 207. A Mg(2+)-binding site is contributed by glutamate 198.

The protein belongs to the cytochrome c oxidase subunit 2 family. As to quaternary structure, component of the cytochrome c oxidase (complex IV, CIV), a multisubunit enzyme composed of 14 subunits. The complex is composed of a catalytic core of 3 subunits MT-CO1, MT-CO2 and MT-CO3, encoded in the mitochondrial DNA, and 11 supernumerary subunits COX4I, COX5A, COX5B, COX6A, COX6B, COX6C, COX7A, COX7B, COX7C, COX8 and NDUFA4, which are encoded in the nuclear genome. The complex exists as a monomer or a dimer and forms supercomplexes (SCs) in the inner mitochondrial membrane with NADH-ubiquinone oxidoreductase (complex I, CI) and ubiquinol-cytochrome c oxidoreductase (cytochrome b-c1 complex, complex III, CIII), resulting in different assemblies (supercomplex SCI(1)III(2)IV(1) and megacomplex MCI(2)III(2)IV(2)). Found in a complex with TMEM177, COA6, COX18, COX20, SCO1 and SCO2. Interacts with TMEM177 in a COX20-dependent manner. Interacts with COX20. Interacts with COX16. The cofactor is Cu cation.

The protein resides in the mitochondrion inner membrane. The catalysed reaction is 4 Fe(II)-[cytochrome c] + O2 + 8 H(+)(in) = 4 Fe(III)-[cytochrome c] + 2 H2O + 4 H(+)(out). In terms of biological role, component of the cytochrome c oxidase, the last enzyme in the mitochondrial electron transport chain which drives oxidative phosphorylation. The respiratory chain contains 3 multisubunit complexes succinate dehydrogenase (complex II, CII), ubiquinol-cytochrome c oxidoreductase (cytochrome b-c1 complex, complex III, CIII) and cytochrome c oxidase (complex IV, CIV), that cooperate to transfer electrons derived from NADH and succinate to molecular oxygen, creating an electrochemical gradient over the inner membrane that drives transmembrane transport and the ATP synthase. Cytochrome c oxidase is the component of the respiratory chain that catalyzes the reduction of oxygen to water. Electrons originating from reduced cytochrome c in the intermembrane space (IMS) are transferred via the dinuclear copper A center (CU(A)) of subunit 2 and heme A of subunit 1 to the active site in subunit 1, a binuclear center (BNC) formed by heme A3 and copper B (CU(B)). The BNC reduces molecular oxygen to 2 water molecules using 4 electrons from cytochrome c in the IMS and 4 protons from the mitochondrial matrix. The protein is Cytochrome c oxidase subunit 2 (MT-CO2) of Propithecus tattersalli (Golden-crowned Sifaka).